We begin with the raw amino-acid sequence, 286 residues long: 4-hydroxybenzoate octaprenyltransferase (286 aa).

9 consecutive transmembrane segments (helical) span residues 22-42 (IGTLLLLWPTLWALWLASAGV), 45-65 (FSLLLIFTAGVFVMRSAGCVI), 90-110 (LTAVRALLFFLLLVLIAFVLV), 113-133 (LNQFTIYLSVGGLLLAAIYPF), 142-162 (QVVLGMAFSWAIPMAYGAVVG), 169-189 (WLLFLANLVWTIAYDTMYAMV), 212-232 (LYIALLQLGTLTLLAIIGWLE), 236-256 (VSYYFSLLLAAGLFIYQQWLI), and 265-285 (FRAFLNNNWVGMLIFAGIMLA).

It belongs to the UbiA prenyltransferase family. Mg(2+) serves as cofactor.

The protein resides in the cell inner membrane. The catalysed reaction is all-trans-octaprenyl diphosphate + 4-hydroxybenzoate = 4-hydroxy-3-(all-trans-octaprenyl)benzoate + diphosphate. It functions in the pathway cofactor biosynthesis; ubiquinone biosynthesis. Catalyzes the prenylation of para-hydroxybenzoate (PHB) with an all-trans polyprenyl group. Mediates the second step in the final reaction sequence of ubiquinone-8 (UQ-8) biosynthesis, which is the condensation of the polyisoprenoid side chain with PHB, generating the first membrane-bound Q intermediate 3-octaprenyl-4-hydroxybenzoate. In Tolumonas auensis (strain DSM 9187 / NBRC 110442 / TA 4), this protein is 4-hydroxybenzoate octaprenyltransferase.